Here is a 210-residue protein sequence, read N- to C-terminus: Dephospho-CoA kinase (210 aa).

The region spanning 18–210 (RIGITGGIAS…LSYPQVEVLL (193 aa)) is the DPCK domain. 26-31 (ASGKTS) contributes to the ATP binding site.

This sequence belongs to the CoaE family.

The protein localises to the cytoplasm. The enzyme catalyses 3'-dephospho-CoA + ATP = ADP + CoA + H(+). It functions in the pathway cofactor biosynthesis; coenzyme A biosynthesis; CoA from (R)-pantothenate: step 5/5. Functionally, catalyzes the phosphorylation of the 3'-hydroxyl group of dephosphocoenzyme A to form coenzyme A. The polypeptide is Dephospho-CoA kinase (Prochlorococcus marinus (strain SARG / CCMP1375 / SS120)).